Consider the following 568-residue polypeptide: Alpha-1,3-galactosidase A (568 aa).

The N-terminal stretch at 1–17 (MMSVWFIQLAIFAQSRI) is a signal peptide. PbH1 repeat units lie at residues 87 to 125 (LYLN…VLKN), 243 to 265 (SKGI…VCQY), 299 to 321 (RGMI…NIHG), 409 to 431 (TPEV…LITT), 432 to 454 (RRKS…FVAD), and 465 to 486 (VHDL…ISID).

It belongs to the glycosyl hydrolase 110 family. A subfamily.

The catalysed reaction is Hydrolysis of terminal, non-reducing branched (1-&gt;3)-alpha-D-galactosidic residues, producing free D-galactose.. It catalyses the reaction Hydrolysis of terminal, non-reducing alpha-D-galactose residues in alpha-D-galactosides, including galactose oligosaccharides, galactomannans and galactolipids.. Its function is as follows. Alpha-galactosidase that specifically removes branched alpha-1,3-linked galactose residues present in blood group B antigens. Has no activity toward linear alpha-1,3-linked galactose residues. In Bacteroides thetaiotaomicron (strain ATCC 29148 / DSM 2079 / JCM 5827 / CCUG 10774 / NCTC 10582 / VPI-5482 / E50), this protein is Alpha-1,3-galactosidase A (glaA).